The primary structure comprises 1126 residues: [F-actin]-monooxygenase mical2 (1126 aa).

The tract at residues 2-494 is monooxygenase domain; sequence GENGDDKHGR…KHLFITNELQ (493 aa). FAD is bound by residues Cys-97, 116–118, 123–125, Phe-183, Tyr-299, and Asp-399; these read EKR and RNN. The region spanning 516-619 is the Calponin-homology (CH) domain; sequence DVRPNKLLIW…MVLYLSKFYE (104 aa). A Nuclear localization signal motif is present at residues 659–680; sequence RKRVPKDEKTSDDSDLNKRRKT. Disordered stretches follow at residues 748-830 and 892-935; these read AVTA…SLSS and PSLG…SGMS. Positions 792–803 are enriched in pro residues; sequence VRPPVQPRPGPA. The segment covering 805–824 has biased composition (basic and acidic residues); sequence PTRELRVVERAQSHPDDLGR. Residues 918 to 932 show a composition bias toward low complexity; sequence SSSDSSPSSAPSRKS. One can recognise an LIM zinc-binding domain in the interval 1001-1063; it reads DTCYFCKRRV…QPHFMHSVTK (63 aa). The Zn(2+) site is built by Cys-1003, Cys-1006, His-1024, Cys-1027, Cys-1030, Cys-1033, Cys-1053, and His-1056.

The protein belongs to the Mical family. Requires FAD as cofactor.

The protein localises to the nucleus. It is found in the cytoplasm. It catalyses the reaction L-methionyl-[F-actin] + NADPH + O2 + H(+) = L-methionyl-(R)-S-oxide-[F-actin] + NADP(+) + H2O. Functionally, nuclear monooxygenase that promotes depolymerization of F-actin by mediating oxidation of specific methionine residues on actin and regulates the srf signaling. Acts by modifying nuclear actin subunits through the addition of oxygen to form methionine-sulfoxide, leading to promote actin filament severing and prevent repolymerization. Acts as a key regulator of the srf signaling pathway elicited by nerve growth factor and serum: mediates oxidation and subsequent depolymerization of nuclear actin, leading to increase mkl1/mrtf-a presence in the nucleus and promote srf:mkl1/mrtf-a-dependent gene transcription. The chain is [F-actin]-monooxygenase mical2 from Xenopus tropicalis (Western clawed frog).